Here is a 312-residue protein sequence, read N- to C-terminus: Olfactory receptor 10C1 (312 aa).

Topologically, residues 1 to 24 are extracellular; that stretch reads MSANTSMVTEFLLLGFSHLADLQG. A glycan (N-linked (GlcNAc...) asparagine) is linked at Asn4. The helical transmembrane segment at 25-45 threads the bilayer; sequence LLFSVFLTIYLLTVAGNFLIV. At 46 to 53 the chain is on the cytoplasmic side; sequence VLVSTDAA. Residues 54–74 traverse the membrane as a helical segment; it reads LQSPMYFFLRTLSALEIGYTS. The Extracellular portion of the chain corresponds to 75–98; that stretch reads VTVPLLLHHLLTGRRHISRSGCAL. The cysteines at positions 96 and 188 are disulfide-linked. The chain crosses the membrane as a helical span at residues 99-119; the sequence is QMFFFLFFGATECCLLAAMAY. Residues 120–138 are Cytoplasmic-facing; the sequence is DRYAAICEPLRYPLLLSHR. The helical transmembrane segment at 139–159 threads the bilayer; sequence VCLQLAGSAWACGVLVGLGHT. The Extracellular segment spans residues 160-196; it reads PFIFSLPFCGPNTIPQFFCEIQPVLQLVCGDTSLNEL. The helical transmembrane segment at 197–216 threads the bilayer; the sequence is QIILATALLILCPFGLILGS. The Cytoplasmic portion of the chain corresponds to 217–236; sequence YGRILVTIFRIPSVAGRRKA. Residues 237–257 traverse the membrane as a helical segment; it reads FSTCSSHLIMVSLFYGTALFI. The Extracellular portion of the chain corresponds to 258–270; that stretch reads YIRPKASYDPATD. The helical transmembrane segment at 271–291 threads the bilayer; it reads PLVSLFYAVVTPILNPIIYSL. Residues 292-312 are Cytoplasmic-facing; sequence RNTEVKAALKRTIQKTVPMEI.

Belongs to the G-protein coupled receptor 1 family.

It is found in the cell membrane. Its function is as follows. Odorant receptor. The polypeptide is Olfactory receptor 10C1 (OR10C1) (Homo sapiens (Human)).